We begin with the raw amino-acid sequence, 320 residues long: Ferrochelatase (320 aa).

2 residues coordinate Fe cation: histidine 194 and glutamate 275.

Belongs to the ferrochelatase family. Monomer.

Its subcellular location is the cytoplasm. It catalyses the reaction heme b + 2 H(+) = protoporphyrin IX + Fe(2+). The protein operates within porphyrin-containing compound metabolism; protoheme biosynthesis; protoheme from protoporphyrin-IX: step 1/1. Its function is as follows. Catalyzes the ferrous insertion into protoporphyrin IX. The protein is Ferrochelatase of Shigella sonnei (strain Ss046).